The primary structure comprises 285 residues: Small ribosomal subunit biogenesis GTPase RsgA (285 aa).

The CP-type G domain maps to 61–215 (KNQLIRPKVA…IIDSPGFSSF (155 aa)). GTP is bound by residues 110-113 (TKID) and 159-167 (GQTGVGKTS). Cys239, Cys244, His246, and Cys254 together coordinate Zn(2+).

The protein belongs to the TRAFAC class YlqF/YawG GTPase family. RsgA subfamily. As to quaternary structure, monomer. Associates with 30S ribosomal subunit, binds 16S rRNA. The cofactor is Zn(2+).

Its subcellular location is the cytoplasm. Functionally, one of several proteins that assist in the late maturation steps of the functional core of the 30S ribosomal subunit. Helps release RbfA from mature subunits. May play a role in the assembly of ribosomal proteins into the subunit. Circularly permuted GTPase that catalyzes slow GTP hydrolysis, GTPase activity is stimulated by the 30S ribosomal subunit. The polypeptide is Small ribosomal subunit biogenesis GTPase RsgA (Mesomycoplasma hyopneumoniae (strain J / ATCC 25934 / NCTC 10110) (Mycoplasma hyopneumoniae)).